We begin with the raw amino-acid sequence, 188 residues long: Segregation and condensation protein B (188 aa).

The protein belongs to the ScpB family. In terms of assembly, homodimer. Homodimerization may be required to stabilize the binding of ScpA to the Smc head domains. Component of a cohesin-like complex composed of ScpA, ScpB and the Smc homodimer, in which ScpA and ScpB bind to the head domain of Smc. The presence of the three proteins is required for the association of the complex with DNA.

It is found in the cytoplasm. Functionally, participates in chromosomal partition during cell division. May act via the formation of a condensin-like complex containing Smc and ScpA that pull DNA away from mid-cell into both cell halves. This Lactococcus lactis subsp. lactis (strain IL1403) (Streptococcus lactis) protein is Segregation and condensation protein B.